Reading from the N-terminus, the 360-residue chain is sn-glycerol-3-phosphate import ATP-binding protein UgpC (360 aa).

The ABC transporter domain occupies 4–235 (LSLKGVRKSY…PATTFVASFI (232 aa)). ATP is bound at residue 37 to 44 (GPSGCGKS).

It belongs to the ABC transporter superfamily. sn-glycerol-3-phosphate importer (TC 3.A.1.1.3) family. As to quaternary structure, the complex is composed of two ATP-binding proteins (UgpC), two transmembrane proteins (UgpA and UgpE) and a solute-binding protein (UgpB).

Its subcellular location is the cell inner membrane. It catalyses the reaction sn-glycerol 3-phosphate(out) + ATP + H2O = sn-glycerol 3-phosphate(in) + ADP + phosphate + H(+). Part of the ABC transporter complex UgpBAEC involved in sn-glycerol-3-phosphate (G3P) import. Responsible for energy coupling to the transport system. This is sn-glycerol-3-phosphate import ATP-binding protein UgpC from Burkholderia pseudomallei (strain K96243).